Reading from the N-terminus, the 320-residue chain is MQNRNTFSWVKEPINRSISVLIIIYVITQTSISNAYPIFAQQGYENPREATGRIVCANCHLANKPVDIEVPQAVLPDTVFEAVVRIPYDSQLKQVLANGKKGGLNVGAVLILPEGFELAPPDRISPEMKEKIGNLSFQSYRPNKKNILVIGPVPGQKYREILFPILSPDPAAKKDAHFLKYPIYVGGNRGRGQIYPDGSKSNNTVYNATAAGTITKILRKEKGGYEISIADASDGRQVVDNIPPGPELLVSEGESIKLDQPLTSNPNVGGFGQGDAEIVLQDPLRVQGLLFFLASVTLAQIFLVLKKKQFEKVQLSEMNF.

Residues 1–35 (MQNRNTFSWVKEPINRSISVLIIIYVITQTSISNA) form the signal peptide. The heme site is built by tyrosine 36, cysteine 56, cysteine 59, and histidine 60. Residues 286–306 (VQGLLFFLASVTLAQIFLVLK) traverse the membrane as a helical segment.

This sequence belongs to the cytochrome f family. In terms of assembly, the 4 large subunits of the cytochrome b6-f complex are cytochrome b6, subunit IV (17 kDa polypeptide, petD), cytochrome f and the Rieske protein, while the 4 small subunits are PetG, PetL, PetM and PetN. The complex functions as a dimer. Heme is required as a cofactor.

Its subcellular location is the plastid. The protein resides in the chloroplast thylakoid membrane. Functionally, component of the cytochrome b6-f complex, which mediates electron transfer between photosystem II (PSII) and photosystem I (PSI), cyclic electron flow around PSI, and state transitions. This Piper cenocladum (Ant piper) protein is Cytochrome f.